Reading from the N-terminus, the 382-residue chain is MSLDFLPFSRPSIGEDEIAAVEQVLRSGWITTGPKNQELEQRFAERLGCRHAVALSSATGALHVTLLALGIGPGDEVITPSLTWVSTANVITLLGATPVFVDVDRDTLMCSAQAVEAAIGPRTRAIVPVHYAGSTLDLEGLRTVAGRHGIALVEDAAHAVGSEYRGRPVGSRGTAIFSFHAIKNLTCAEGAMFVSDDSALAERVRRLKFHGLGVDAYDRLSHGRKPQAEVIEPGFKYNLADLNAALALVQLKRLDALNARRQALAERYLERLAGLPLAPLGLPAHKQRHAWHLFILRIDAEACGLGRDAFMEALKARGIGSGIHFIASHLHHYYRQRQPRLSLPNSEWNSARLCSIPLFPDMRDDDIERVARAIEDILEKRR.

Lys-183 carries the post-translational modification N6-(pyridoxal phosphate)lysine.

The protein belongs to the DegT/DnrJ/EryC1 family. ArnB subfamily. Homodimer. It depends on pyridoxal 5'-phosphate as a cofactor.

The catalysed reaction is UDP-4-amino-4-deoxy-beta-L-arabinose + 2-oxoglutarate = UDP-beta-L-threo-pentopyranos-4-ulose + L-glutamate. The protein operates within nucleotide-sugar biosynthesis; UDP-4-deoxy-4-formamido-beta-L-arabinose biosynthesis; UDP-4-deoxy-4-formamido-beta-L-arabinose from UDP-alpha-D-glucuronate: step 2/3. It participates in bacterial outer membrane biogenesis; lipopolysaccharide biosynthesis. Its function is as follows. Catalyzes the conversion of UDP-4-keto-arabinose (UDP-Ara4O) to UDP-4-amino-4-deoxy-L-arabinose (UDP-L-Ara4N). The modified arabinose is attached to lipid A and is required for resistance to polymyxin and cationic antimicrobial peptides. The chain is UDP-4-amino-4-deoxy-L-arabinose--oxoglutarate aminotransferase from Pseudomonas aeruginosa (strain UCBPP-PA14).